Reading from the N-terminus, the 589-residue chain is Polypeptide N-acetylgalactosaminyltransferase 4 (589 aa).

At 1 to 11 (MLPRMLKMKTV) the chain is on the cytoplasmic side. A helical; Signal-anchor for type II membrane protein transmembrane segment spans residues 12-31 (GTVLAVIWLFGLAFIYVQST). The Lumenal segment spans residues 32–589 (SSSLRPPGRH…WIFEKLDTYE (558 aa)). Positions 33–73 (SSLRPPGRHPPPLPQLDPLIPQNPPQNDEIRPKKSAPPIPT) are disordered. 5 disulfides stabilise this stretch: Cys140/Cys369, Cys360/Cys438, Cys471/Cys488, Cys514/Cys531, and Cys553/Cys571. The tract at residues 150–255 (MQPTTVIITY…QKWLEPLLAR (106 aa)) is catalytic subdomain A. Substrate-binding residues include Asp191 and Arg216. Asp239 provides a ligand contact to Mn(2+). Substrate is bound at residue Ser240. His241 contributes to the Mn(2+) binding site. Residues 315 to 377 (PIRSPTMAGG…PCSRVGHVFR (63 aa)) form a catalytic subdomain B region. Trp346 lines the substrate pocket. A Mn(2+)-binding site is contributed by His374. Residues Arg377, His380, and Tyr382 each contribute to the substrate site. The Ricin B-type lectin domain maps to 458–589 (TPGKSFQMKI…WIFEKLDTYE (132 aa)). An N-linked (GlcNAc...) asparagine glycan is attached at Asn523.

This sequence belongs to the glycosyltransferase 2 family. GalNAc-T subfamily. Mn(2+) serves as cofactor.

It is found in the golgi apparatus membrane. It carries out the reaction L-seryl-[protein] + UDP-N-acetyl-alpha-D-galactosamine = a 3-O-[N-acetyl-alpha-D-galactosaminyl]-L-seryl-[protein] + UDP + H(+). The enzyme catalyses L-threonyl-[protein] + UDP-N-acetyl-alpha-D-galactosamine = a 3-O-[N-acetyl-alpha-D-galactosaminyl]-L-threonyl-[protein] + UDP + H(+). Its pathway is protein modification; protein glycosylation. In terms of biological role, catalyzes the initial reaction in O-linked oligosaccharide biosynthesis, the transfer of an N-acetyl-D-galactosamine residue to a serine or threonine residue on the protein receptor. This chain is Polypeptide N-acetylgalactosaminyltransferase 4 (gly-4), found in Caenorhabditis elegans.